A 131-amino-acid polypeptide reads, in one-letter code: Holo-[acyl-carrier-protein] synthase (131 aa).

Mg(2+)-binding residues include Asp-8 and Glu-63.

This sequence belongs to the P-Pant transferase superfamily. AcpS family. Mg(2+) is required as a cofactor.

It localises to the cytoplasm. It catalyses the reaction apo-[ACP] + CoA = holo-[ACP] + adenosine 3',5'-bisphosphate + H(+). Transfers the 4'-phosphopantetheine moiety from coenzyme A to a Ser of acyl-carrier-protein. The polypeptide is Holo-[acyl-carrier-protein] synthase (Shewanella pealeana (strain ATCC 700345 / ANG-SQ1)).